A 511-amino-acid chain; its full sequence is Myrosinase 4 (511 aa).

The first 23 residues, 1–23 (MAIPKAHYSLAVLVLLFVVVSSS), serve as a signal peptide directing secretion. 3 disulfides stabilise this stretch: Cys-31-Cys-450, Cys-39-Cys-445, and Cys-230-Cys-233. Residues Asn-46 and Asn-53 are each glycosylated (N-linked (GlcNAc...) asparagine). Residues Gln-64, His-165, and 210-211 (NQ) each bind a beta-D-glucoside. Residues Tyr-351 and Glu-418 each coordinate a beta-D-glucoside. Glu-418 (nucleophile) is an active-site residue. N-linked (GlcNAc...) asparagine glycosylation occurs at Asn-428. A beta-D-glucoside is bound by residues Trp-467, 474–475 (EF), and Phe-483. The N-linked (GlcNAc...) asparagine glycan is linked to Asn-489.

Belongs to the glycosyl hydrolase 1 family. As to expression, specifically expressed in roots.

The enzyme catalyses a thioglucoside + H2O = a sugar + a thiol.. It carries out the reaction Hydrolysis of terminal, non-reducing beta-D-glucosyl residues with release of beta-D-glucose.. Hydrolyzes sinigrin and, with lower efficiency, p-nitrophenyl beta-D-glucoside. In Arabidopsis thaliana (Mouse-ear cress), this protein is Myrosinase 4.